The chain runs to 172 residues: Adenine phosphoribosyltransferase (172 aa).

Belongs to the purine/pyrimidine phosphoribosyltransferase family. As to quaternary structure, homodimer.

The protein localises to the cytoplasm. It catalyses the reaction AMP + diphosphate = 5-phospho-alpha-D-ribose 1-diphosphate + adenine. It participates in purine metabolism; AMP biosynthesis via salvage pathway; AMP from adenine: step 1/1. Catalyzes a salvage reaction resulting in the formation of AMP, that is energically less costly than de novo synthesis. The chain is Adenine phosphoribosyltransferase from Clostridium botulinum (strain Eklund 17B / Type B).